Reading from the N-terminus, the 440-residue chain is Murein DD-endopeptidase MepM (440 aa).

A helical transmembrane segment spans residues 21–40 (VMLGSLTVLTLAVAVWRPYV). In terms of domain architecture, LysM spans 96–141 (HEYVVSTGDTLSSILNQYGIDMGDITQLAAADKELRNLKIGQQLSW). Residue His314 coordinates Zn(2+).

The protein belongs to the peptidase M23B family. Zn(2+) serves as cofactor.

Its subcellular location is the cell membrane. It participates in cell wall biogenesis; cell wall polysaccharide biosynthesis. Functionally, a murein DD-endopeptidase with specificity for D-Ala-meso-diaminopimelic acid (mDAP) cross-links. Its role is probably to cleave D-Ala-mDAP cross-links to allow insertion of new glycans and thus cell wall expansion. Functionally redundant with MepM and MepH. This is Murein DD-endopeptidase MepM (mepM) from Escherichia coli O6:H1 (strain CFT073 / ATCC 700928 / UPEC).